Here is a 230-residue protein sequence, read N- to C-terminus: tRNA (guanine-N(7)-)-methyltransferase (230 aa).

The S-adenosyl-L-methionine site is built by glutamate 61, glutamate 86, aspartate 113, and aspartate 135. The active site involves aspartate 135. Residues lysine 139, aspartate 171, and 209-212 (TRYE) contribute to the substrate site.

The protein belongs to the class I-like SAM-binding methyltransferase superfamily. TrmB family.

It carries out the reaction guanosine(46) in tRNA + S-adenosyl-L-methionine = N(7)-methylguanosine(46) in tRNA + S-adenosyl-L-homocysteine. It participates in tRNA modification; N(7)-methylguanine-tRNA biosynthesis. In terms of biological role, catalyzes the formation of N(7)-methylguanine at position 46 (m7G46) in tRNA. In Rhizobium etli (strain ATCC 51251 / DSM 11541 / JCM 21823 / NBRC 15573 / CFN 42), this protein is tRNA (guanine-N(7)-)-methyltransferase.